Consider the following 474-residue polypeptide: TOM1-like protein 1 (474 aa).

One can recognise a VHS domain in the interval 22–154 (ATFAGVLTED…DLLKKGVQFP (133 aa)). Residues 153 to 180 (FPPSDGEPETRQEAGQISPNRPTSVPTA) form a disordered region. The segment covering 165-178 (EAGQISPNRPTSVP) has biased composition (polar residues). Residue Ser-170 is modified to Phosphoserine. A GAT domain is found at 199 to 287 (EQIGKLHSEL…AVLGYERFTR (89 aa)). The disordered stretch occupies residues 291–317 (RLLEQKRNRTEATRTSSEPSAPSCDLL). Residues 293–302 (LEQKRNRTEA) are compositionally biased toward basic and acidic residues. Phosphoserine occurs at positions 313 and 320. An interaction with GRB2 region spans residues 392–395 (YDNF). The SH3-binding signature appears at 420 to 424 (LPPLP). The interval 441–444 (YEVM) is interaction with PIK3R1. At Tyr-457 the chain carries Phosphotyrosine. An SH2-binding motif is present at residues 457 to 460 (YEEI).

It belongs to the TOM1 family. In terms of assembly, interacts with LYN. Interacts with the SH2 and SH3 domains of FYN when phosphorylated. Also interacts with GRB2 and PIK3R1 when phosphorylated. Phosphorylated on tyrosines by LYN. Phosphorylated on tyrosines by FYN. Strongly expressed in brain and kidney, expressed at intermediate levels skin and heart, and weakly expressed in thymus. Not expressed in liver and spleen.

It is found in the golgi apparatus. It localises to the golgi stack. Its subcellular location is the endosome membrane. The protein resides in the cytoplasm. The protein localises to the membrane. In terms of biological role, probable adapter protein involved in signaling pathways. Interacts with the SH2 and SH3 domains of various signaling proteins when it is phosphorylated. May promote FYN activation, possibly by disrupting intramolecular SH3-dependent interactions. The sequence is that of TOM1-like protein 1 (Tom1l1) from Mus musculus (Mouse).